A 221-amino-acid polypeptide reads, in one-letter code: Large ribosomal subunit protein uL4 (221 aa).

The interval 44–102 (AARQGTHKVKRRGEVRGGGKKPYRQKGTGRARQGSTRAPQFAGGGVVHGPTPRDYSQRT) is disordered. Basic residues predominate over residues 61–72 (GGKKPYRQKGTG).

It belongs to the universal ribosomal protein uL4 family. In terms of assembly, part of the 50S ribosomal subunit.

Functionally, one of the primary rRNA binding proteins, this protein initially binds near the 5'-end of the 23S rRNA. It is important during the early stages of 50S assembly. It makes multiple contacts with different domains of the 23S rRNA in the assembled 50S subunit and ribosome. Its function is as follows. Forms part of the polypeptide exit tunnel. In Streptomyces avermitilis (strain ATCC 31267 / DSM 46492 / JCM 5070 / NBRC 14893 / NCIMB 12804 / NRRL 8165 / MA-4680), this protein is Large ribosomal subunit protein uL4.